A 237-amino-acid chain; its full sequence is Cytochrome c oxidase subunit 2 (237 aa).

Residues 1-30 (MNLVAPTPWGLFFQDSATPQMEGIEELHNN) are Mitochondrial intermembrane-facing. The chain crosses the membrane as a helical span at residues 31–51 (IMFYLTIILFSVTWMMITIIK). Topologically, residues 52–67 (SFVNTKSPISHKYMNH) are mitochondrial matrix. A helical transmembrane segment spans residues 68 to 94 (GTLIELIWTITPAVILILIAFPSFKLL). Topologically, residues 95-237 (YLMDEVMDPS…SVSLKNFYYD (143 aa)) are mitochondrial intermembrane. Cu cation contacts are provided by H176, C211, E213, C215, H219, and M222. E213 provides a ligand contact to Mg(2+).

This sequence belongs to the cytochrome c oxidase subunit 2 family. Component of the cytochrome c oxidase (complex IV, CIV), a multisubunit enzyme composed of a catalytic core of 3 subunits and several supernumerary subunits. The complex exists as a monomer or a dimer and forms supercomplexes (SCs) in the inner mitochondrial membrane with ubiquinol-cytochrome c oxidoreductase (cytochrome b-c1 complex, complex III, CIII). Cu cation serves as cofactor.

The protein localises to the mitochondrion inner membrane. The catalysed reaction is 4 Fe(II)-[cytochrome c] + O2 + 8 H(+)(in) = 4 Fe(III)-[cytochrome c] + 2 H2O + 4 H(+)(out). In terms of biological role, component of the cytochrome c oxidase, the last enzyme in the mitochondrial electron transport chain which drives oxidative phosphorylation. The respiratory chain contains 3 multisubunit complexes succinate dehydrogenase (complex II, CII), ubiquinol-cytochrome c oxidoreductase (cytochrome b-c1 complex, complex III, CIII) and cytochrome c oxidase (complex IV, CIV), that cooperate to transfer electrons derived from NADH and succinate to molecular oxygen, creating an electrochemical gradient over the inner membrane that drives transmembrane transport and the ATP synthase. Cytochrome c oxidase is the component of the respiratory chain that catalyzes the reduction of oxygen to water. Electrons originating from reduced cytochrome c in the intermembrane space (IMS) are transferred via the dinuclear copper A center (CU(A)) of subunit 2 and heme A of subunit 1 to the active site in subunit 1, a binuclear center (BNC) formed by heme A3 and copper B (CU(B)). The BNC reduces molecular oxygen to 2 water molecules using 4 electrons from cytochrome c in the IMS and 4 protons from the mitochondrial matrix. This Trichophyton rubrum (Athlete's foot fungus) protein is Cytochrome c oxidase subunit 2 (COX2).